The primary structure comprises 180 residues: D-glycero-beta-D-manno-heptose-1,7-bisphosphate 7-phosphatase (180 aa).

The active-site Nucleophile is aspartate 14. 2 residues coordinate Mg(2+): aspartate 14 and aspartate 16. Residues 14–16, 22–25, and 56–59 contribute to the substrate site; these read DRD, NDHY, and TNQS. The Proton donor role is filled by aspartate 16. Zn(2+) contacts are provided by cysteine 95, histidine 97, cysteine 110, and histidine 112. 113 to 114 contributes to the substrate binding site; it reads RK. Residue aspartate 139 participates in Mg(2+) binding.

It belongs to the gmhB family. In terms of assembly, monomer. Mg(2+) serves as cofactor.

The protein localises to the cytoplasm. The catalysed reaction is D-glycero-beta-D-manno-heptose 1,7-bisphosphate + H2O = D-glycero-beta-D-manno-heptose 1-phosphate + phosphate. The protein operates within nucleotide-sugar biosynthesis; ADP-L-glycero-beta-D-manno-heptose biosynthesis; ADP-L-glycero-beta-D-manno-heptose from D-glycero-beta-D-manno-heptose 7-phosphate: step 2/4. It participates in bacterial outer membrane biogenesis; LPS core biosynthesis. In terms of biological role, converts the D-glycero-beta-D-manno-heptose 1,7-bisphosphate (beta-HBP) intermediate into D-glycero-beta-D-manno-heptose 1-phosphate by removing the phosphate group at the C-7 position. Also catalyzes the dephosphorylation of D-glycero-alpha-D-manno-heptose 1,7-bisphosphate in vitro. The polypeptide is D-glycero-beta-D-manno-heptose-1,7-bisphosphate 7-phosphatase (Rhodopseudomonas palustris (strain ATCC BAA-98 / CGA009)).